Here is a 411-residue protein sequence, read N- to C-terminus: MNILKDLEERLILKDISNKDKFANLSPSTTGVYVGFDPTAESLHLGNYILISVLLRFKEYGFKTYAVLGGATGMIGDPSFKDSERVLLDNESVNKNKSKIKAQLESFGLEVIDNYDFYKDMNVLEFLRNVGKLVNVSYMMAKESVQKRIQKGLSFTEFTYQLLQGFDFLKTYQELGVKVQLGGSDQWGNIVTGIDMISKVVGDKHEAVGVTVNLLSDENGKKIGKSTGGGALWIDKNMCSPFKMYQYLLSQKDSRIKELLYWFSFKSVSEINEVLEKHFANPSTQEAQRFLASEVVENIFGANELKQAKNITKILFDKSFDASVLTLNDLEIIENYLPTCPIRQGDSVIETLIKNKFIVSNREAREFIQAKALKIDNKEIEFDSIYSPSLFEGKYAFFKKGKKQVILFKTV.

Residue Tyr-33 coordinates L-tyrosine. Residues 38 to 47 (PTAESLHLGN) carry the 'HIGH' region motif. The L-tyrosine site is built by Tyr-160 and Gln-164. Positions 222 to 226 (KIGKS) match the 'KMSKS' region motif. Lys-225 is an ATP binding site. Residues 347–411 (SVIETLIKNK…KKQVILFKTV (65 aa)) enclose the S4 RNA-binding domain.

This sequence belongs to the class-I aminoacyl-tRNA synthetase family. TyrS type 1 subfamily. In terms of assembly, homodimer.

It localises to the cytoplasm. The enzyme catalyses tRNA(Tyr) + L-tyrosine + ATP = L-tyrosyl-tRNA(Tyr) + AMP + diphosphate + H(+). Catalyzes the attachment of tyrosine to tRNA(Tyr) in a two-step reaction: tyrosine is first activated by ATP to form Tyr-AMP and then transferred to the acceptor end of tRNA(Tyr). The sequence is that of Tyrosine--tRNA ligase from Mycoplasmopsis agalactiae (strain NCTC 10123 / CIP 59.7 / PG2) (Mycoplasma agalactiae).